Consider the following 121-residue polypeptide: Putative RNase MJ0127 (121 aa).

Active-site residues include R76 and H81. The RX(4)HXY motif motif lies at 76-83; the sequence is RDKLIHHY. At Y83 the chain carries O-di-AMP-tyrosine.

Belongs to the HepT RNase toxin family. In terms of assembly, homodimer, probably forms a complex with cognate antitoxin MJ0128. Modified by cognate antitoxin MJ0128; probably at least 2 successive AMPylation events occur on Tyr-83.

In terms of biological role, probable toxic component of a putative type VII toxin-antitoxin (TA) system, probably an RNase. Probably neutralized by cognate antitoxin MJ0128. Neutralization may be due to AMPylation by MJ0128. In Methanocaldococcus jannaschii (strain ATCC 43067 / DSM 2661 / JAL-1 / JCM 10045 / NBRC 100440) (Methanococcus jannaschii), this protein is Putative RNase MJ0127.